A 310-amino-acid polypeptide reads, in one-letter code: Methionyl-tRNA formyltransferase (310 aa).

(6S)-5,6,7,8-tetrahydrofolate is bound at residue Ser111–Pro114.

It belongs to the Fmt family.

The enzyme catalyses L-methionyl-tRNA(fMet) + (6R)-10-formyltetrahydrofolate = N-formyl-L-methionyl-tRNA(fMet) + (6S)-5,6,7,8-tetrahydrofolate + H(+). Functionally, attaches a formyl group to the free amino group of methionyl-tRNA(fMet). The formyl group appears to play a dual role in the initiator identity of N-formylmethionyl-tRNA by promoting its recognition by IF2 and preventing the misappropriation of this tRNA by the elongation apparatus. The polypeptide is Methionyl-tRNA formyltransferase (Methylobacterium nodulans (strain LMG 21967 / CNCM I-2342 / ORS 2060)).